A 250-amino-acid polypeptide reads, in one-letter code: MSDLQTQMDLEQQGVLFTTINKLYNWGRRSSVWPMQFGLACCAIEMIAAAASRYDISRFGSELFRASPRQADVMIVAGTVTKKMVPQVVRLFNQMPEPRYVISMGACATSGGPFRDGYNVVRGVDLYVPVDVYIPGCPPRPEALLHALMTLQAQIDVQSLQQVRWYGDDEGVVNEFPVPIFGAEGLEVPGIPGTADPVGGTPKMPPFVSPALGGKGERDASIKALEGNQPKPMLRAGTVTIEEVAHGIAG.

[4Fe-4S] cluster contacts are provided by Cys41, Cys42, Cys107, and Cys137.

It belongs to the complex I 20 kDa subunit family. In terms of assembly, NDH-1 is composed of 14 different subunits. Subunits NuoB, C, D, E, F, and G constitute the peripheral sector of the complex. The cofactor is [4Fe-4S] cluster.

The protein resides in the cell membrane. It catalyses the reaction a quinone + NADH + 5 H(+)(in) = a quinol + NAD(+) + 4 H(+)(out). In terms of biological role, NDH-1 shuttles electrons from NADH, via FMN and iron-sulfur (Fe-S) centers, to quinones in the respiratory chain. The immediate electron acceptor for the enzyme in this species is believed to be ubiquinone. Couples the redox reaction to proton translocation (for every two electrons transferred, four hydrogen ions are translocated across the cytoplasmic membrane), and thus conserves the redox energy in a proton gradient. The polypeptide is NADH-quinone oxidoreductase subunit B 2 (Herpetosiphon aurantiacus (strain ATCC 23779 / DSM 785 / 114-95)).